The primary structure comprises 265 residues: 5'-nucleotidase SurE (265 aa).

Residues aspartate 8, aspartate 9, serine 39, and asparagine 96 each coordinate a divalent metal cation.

This sequence belongs to the SurE nucleotidase family. A divalent metal cation is required as a cofactor.

It localises to the cytoplasm. The catalysed reaction is a ribonucleoside 5'-phosphate + H2O = a ribonucleoside + phosphate. In terms of biological role, nucleotidase that shows phosphatase activity on nucleoside 5'-monophosphates. The sequence is that of 5'-nucleotidase SurE from Dehalococcoides mccartyi (strain CBDB1).